A 127-amino-acid polypeptide reads, in one-letter code: Putative B3 domain-containing protein At4g12617 (127 aa).

Positions 35–127 form a DNA-binding region, TF-B3; the sequence is IMMPKTLLEA…HTRLNFKHVA (93 aa).

The protein localises to the nucleus. The sequence is that of Putative B3 domain-containing protein At4g12617 from Arabidopsis thaliana (Mouse-ear cress).